A 261-amino-acid polypeptide reads, in one-letter code: Non-homologous end joining protein Ku 1 (261 aa).

The region spanning 12 to 171 (SFSLVAIPVQ…LITLHYSDEV (160 aa)) is the Ku domain.

Belongs to the prokaryotic Ku family. As to quaternary structure, homodimer. Interacts with LigD.

With LigD forms a non-homologous end joining (NHEJ) DNA repair enzyme, which repairs dsDNA breaks with reduced fidelity. Binds linear dsDNA with 5'- and 3'- overhangs but not closed circular dsDNA nor ssDNA. Recruits and stimulates the ligase activity of LigD. The sequence is that of Non-homologous end joining protein Ku 1 from Geotalea uraniireducens (strain Rf4) (Geobacter uraniireducens).